The primary structure comprises 241 residues: MRKTIIAGNWKMYKTQLEAKEFLEGLMSQLTKTPEEREVVLCTPFTALDFMSKILHGSLIRLGAQNVHWEDEGAYTGEISGLMLKDVGVSYVIVGHSERRQYFGETDETVNMRLKAAQKHGLTPILCVGETKQQRDSGETESHIFSQLANDLVDVDQENLVIAYEPIWAIGTGDTCEAKEANRVIGLIRGKLNNSNVTIQYGGSVKPNNVDDIMAQEEIDGALVGGASLNPESFSRLVNYQ.

9–11 contributes to the substrate binding site; the sequence is NWK. His96 functions as the Electrophile in the catalytic mechanism. Glu165 acts as the Proton acceptor in catalysis. Substrate is bound by residues Gly171, Ser204, and 225 to 226; that span reads GG.

The protein belongs to the triosephosphate isomerase family. Homodimer.

Its subcellular location is the cytoplasm. It catalyses the reaction D-glyceraldehyde 3-phosphate = dihydroxyacetone phosphate. It participates in carbohydrate biosynthesis; gluconeogenesis. The protein operates within carbohydrate degradation; glycolysis; D-glyceraldehyde 3-phosphate from glycerone phosphate: step 1/1. In terms of biological role, involved in the gluconeogenesis. Catalyzes stereospecifically the conversion of dihydroxyacetone phosphate (DHAP) to D-glyceraldehyde-3-phosphate (G3P). The chain is Triosephosphate isomerase from Trichodesmium erythraeum (strain IMS101).